A 62-amino-acid chain; its full sequence is Phyllokinin-1 (62 aa).

A signal peptide spans methionine 1 to serine 19. Positions serine 20–glutamate 48 are excised as a propeptide. The tract at residues cysteine 22–tyrosine 62 is disordered. Acidic residues predominate over residues glutamate 30–serine 42. Basic and acidic residues predominate over residues glutamate 43–arginine 52. Sulfotyrosine; partial is present on tyrosine 62.

This sequence belongs to the frog skin active peptide (FSAP) family. Bradykinin-related peptide subfamily. In terms of processing, asp,Pro,Glu-[Thr6,Val10]-phyllokinin and [Thr6,Val10]-phyllokinin occur in sulfated and nonsulfated forms. [Thr6]-bradykinin and Des-Arg-[Thr6]-bradykinin are nonsulfated. In terms of tissue distribution, expressed by the skin glands.

Its subcellular location is the secreted. Its function is as follows. Inhibits ACE with a Ki of 1.6 uM, and targets B2 bradykinin receptor (BDKRB2). Provokes contraction of smooth muscle preparation (ileum). In vivo, induces an early hyperalgesic effects in living rats after intraplantar injection. This chain is Phyllokinin-1, found in Pithecopus azureus (Orange-legged monkey tree frog).